Consider the following 172-residue polypeptide: Stellate protein CG33236/CG33240/CG33244/CG33245 (172 aa).

This sequence belongs to the casein kinase 2 subunit beta family. In terms of assembly, interacts in vitro with the casein kinase 2 alpha subunit (CkII-alpha). The relevance of such interaction is however unclear in vivo. In terms of tissue distribution, probably not expressed in wild-type flies. In males lacking the Y chromosome, it is testis-specific and constitutes the main component of star-shaped crystals.

Unknown. In males lacking the Y chromosome, its strong overexpression leads to the appearance of proteinaceous star-shaped crystals in the primary spermatocytes causing meiotic drive, possibly by interfering with normal casein kinase 2 activity. This chain is Stellate protein CG33236/CG33240/CG33244/CG33245 (Ste:CG33236), found in Drosophila melanogaster (Fruit fly).